The chain runs to 317 residues: Aspartate carbamoyltransferase catalytic subunit (317 aa).

Arginine 66 and threonine 67 together coordinate carbamoyl phosphate. Lysine 94 contributes to the L-aspartate binding site. Residues arginine 116, histidine 144, and glutamine 147 each contribute to the carbamoyl phosphate site. Positions 177 and 231 each coordinate L-aspartate. Glycine 272 and proline 273 together coordinate carbamoyl phosphate.

The protein belongs to the aspartate/ornithine carbamoyltransferase superfamily. ATCase family. As to quaternary structure, heterododecamer (2C3:3R2) of six catalytic PyrB chains organized as two trimers (C3), and six regulatory PyrI chains organized as three dimers (R2).

It carries out the reaction carbamoyl phosphate + L-aspartate = N-carbamoyl-L-aspartate + phosphate + H(+). The protein operates within pyrimidine metabolism; UMP biosynthesis via de novo pathway; (S)-dihydroorotate from bicarbonate: step 2/3. Catalyzes the condensation of carbamoyl phosphate and aspartate to form carbamoyl aspartate and inorganic phosphate, the committed step in the de novo pyrimidine nucleotide biosynthesis pathway. This chain is Aspartate carbamoyltransferase catalytic subunit, found in Rhodopseudomonas palustris (strain BisB5).